Here is a 349-residue protein sequence, read N- to C-terminus: Two pore potassium channel b (349 aa).

Residues 1-53 (MAALDQQPLLHDGGDQKPPPEGAARRFRRCRTAPSSEPPPTDKDNSSAADAPP) are disordered. Topologically, residues 1–66 (MAALDQQPLL…FTGGGRPSFR (66 aa)) are cytoplasmic. Residues 67 to 87 (LVGLLLVAYLLLGTIAFYLAM) form a helical membrane-spanning segment. An intramembrane region (pore-forming) is located at residues 100–119 (DALYFCVVTMTTVGYGDLVP). A helical transmembrane segment spans residues 123 to 143 (AAKLLACAFVFAGVAVVGTFL). At 144-180 (SKAADYLVEKQEALLFRALHSHTMVRAMEMNKVRYKL) the chain is on the cytoplasmic side. Residues 181-201 (YTAGLLLVAAVASGTVVLWKV) form a helical membrane-spanning segment. An intramembrane region (pore-forming) is located at residues 208-227 (DAFYCVCATVTTLGYGDRSF). Residues 234–254 (AFAVAWITVSTVVVALFFLYA) traverse the membrane as a helical segment. The Cytoplasmic portion of the chain corresponds to 255–349 (AELYTERRQR…PTPDPPPSLR (95 aa)). EF-hand domains are found at residues 271–306 (LRRRTTNMDLEAADLDGDHRVGAADFVLYKLKELGK) and 310–345 (EDISEFLDEFDNLDADHSGTLSPADLAAAQPTPDPP). Positions 284, 286, 288, 290, 295, 323, 325, 327, 329, and 334 each coordinate Ca(2+). Residues 326-349 (HSGTLSPADLAAAQPTPDPPPSLR) form a disordered region.

This sequence belongs to the two pore domain potassium channel (TC 1.A.1.7) family. In terms of assembly, homodimer.

It is found in the vacuole membrane. Highly selective inward-rectifying potassium channel that is specifically located in the tonoplast of protein storage vacuoles. Functions independently of the voltage difference across the membrane. This is Two pore potassium channel b (TPKB) from Oryza sativa subsp. japonica (Rice).